A 442-amino-acid polypeptide reads, in one-letter code: D-serine dehydratase (442 aa).

Residue K118 is modified to N6-(pyridoxal phosphate)lysine.

It belongs to the serine/threonine dehydratase family. DsdA subfamily. As to quaternary structure, monomer. It depends on pyridoxal 5'-phosphate as a cofactor.

The catalysed reaction is D-serine = pyruvate + NH4(+). In Shigella flexneri, this protein is D-serine dehydratase.